The following is a 254-amino-acid chain: Phosphoribosylaminoimidazole-succinocarboxamide synthase (254 aa).

It belongs to the SAICAR synthetase family.

The enzyme catalyses 5-amino-1-(5-phospho-D-ribosyl)imidazole-4-carboxylate + L-aspartate + ATP = (2S)-2-[5-amino-1-(5-phospho-beta-D-ribosyl)imidazole-4-carboxamido]succinate + ADP + phosphate + 2 H(+). It participates in purine metabolism; IMP biosynthesis via de novo pathway; 5-amino-1-(5-phospho-D-ribosyl)imidazole-4-carboxamide from 5-amino-1-(5-phospho-D-ribosyl)imidazole-4-carboxylate: step 1/2. The protein is Phosphoribosylaminoimidazole-succinocarboxamide synthase of Sinorhizobium fredii (strain NBRC 101917 / NGR234).